Reading from the N-terminus, the 291-residue chain is Homoserine kinase (291 aa).

80–90 (PLARGLGSSST) contributes to the ATP binding site.

The protein belongs to the GHMP kinase family. Homoserine kinase subfamily.

It localises to the cytoplasm. It carries out the reaction L-homoserine + ATP = O-phospho-L-homoserine + ADP + H(+). It participates in amino-acid biosynthesis; L-threonine biosynthesis; L-threonine from L-aspartate: step 4/5. Catalyzes the ATP-dependent phosphorylation of L-homoserine to L-homoserine phosphate. This Lactiplantibacillus plantarum (strain ATCC BAA-793 / NCIMB 8826 / WCFS1) (Lactobacillus plantarum) protein is Homoserine kinase.